We begin with the raw amino-acid sequence, 508 residues long: Phosphoenolpyruvate carboxylase (508 aa).

The protein belongs to the PEPCase type 2 family. As to quaternary structure, homotetramer. It depends on Mg(2+) as a cofactor.

The catalysed reaction is oxaloacetate + phosphate = phosphoenolpyruvate + hydrogencarbonate. In terms of biological role, catalyzes the irreversible beta-carboxylation of phosphoenolpyruvate (PEP) to form oxaloacetate (OAA), a four-carbon dicarboxylic acid source for the tricarboxylic acid cycle. The polypeptide is Phosphoenolpyruvate carboxylase (Picrophilus torridus (strain ATCC 700027 / DSM 9790 / JCM 10055 / NBRC 100828 / KAW 2/3)).